A 596-amino-acid polypeptide reads, in one-letter code: Zinc finger E-box-binding homeobox protein zag-1 (596 aa).

The C2H2-type 1 zinc-finger motif lies at 24-46 (FKCPECTKAFKFKHHLKEHIRIH). Residues 52–72 (FECQQCHKRFSHSGSYSSHMS) form a C2H2-type 2; degenerate zinc finger. Positions 133–145 (LENGTSPTPTQEP) are enriched in polar residues. Disordered stretches follow at residues 133 to 225 (LENG…RPLR), 324 to 369 (NNSL…EPEW), and 395 to 421 (GFVT…GSSS). Residues 165-179 (SEVKTEVKTEVKTED) show a composition bias toward basic and acidic residues. Positions 188 to 200 (PAVSMSLSPAPEQ) are enriched in polar residues. Residues 201–216 (NGNESMNNGGSGSDGK) show a composition bias toward low complexity. The homeobox DNA-binding region spans 223–282 (PLRSRSFLNDSQVAVLQNHFKRNPFPSKYELSAVAEQIGVNKRVVQVWFQNTRAKERRSN). The segment covering 331–355 (QDERNNENTDEVMDHDGLKDGKETP) has biased composition (basic and acidic residues). C2H2-type zinc fingers lie at residues 481-503 (FSCD…KYEH) and 509-531 (YKCD…KRLH). A C2H2-type 5; degenerate zinc finger spans residues 537 to 560 (FQCDKCLKRFSHSGSYSQHMNHRY). The tract at residues 569 to 596 (QPASPSDVLNGGSVTVSPSSSNTPPPST) is disordered. Over residues 578–590 (NGGSVTVSPSSSN) the composition is skewed to low complexity.

In terms of tissue distribution, expressed in the six touch receptor neurons (TRNs) but not in the FLP and PVD neurons. Expressed in the M4 cholinergic motor neuron.

It localises to the nucleus. Functionally, transcription factor. Down-regulates expression of genes involved in either the synthesis or reuptake of serotonin, dopamine and GABA. Acts as a transcriptional repressor to regulate multiple, discrete, neuron-specific aspects of terminal differentiation, including cell migration, axonal development and gene expression. Promotes touch receptor neuron differentiation by repressing the expression of egl-44 and egl-46. As egl-44 and egl-46, probably acting as a heterodimer, repress expression of zag-1 in FLP neurons, together these proteins form a bistable, negative-feedback loop that regulates the choice between neuronal fates. Required for axon guidance. Involved in the proper development of the pharynx. Required for pharynx isthmus peristalsis, probably via a role in the differentiation of the M4 cholinergic motor neuron. Directly represses its own transcription by interacting with conserved E-box sequence motifs 5'-CACCTG-3' in its own promoter. May also act as a transcriptional activator of the homeodomain ceh-28. In Caenorhabditis elegans, this protein is Zinc finger E-box-binding homeobox protein zag-1.